Consider the following 491-residue polypeptide: Rab5 GDP/GTP exchange factor (491 aa).

The interval 1–74 (MSLKSERRGI…EEEAFASSQS (74 aa)) is interaction with ubiquitinated proteins. The A20-type zinc-finger motif lies at 13-47 (DQSDLLCKKGCGYYGNPAWQGFCSKCWREEYHKAR). 4 residues coordinate Zn(2+): Cys-19, Cys-23, Cys-35, and Cys-38. Residues 66–85 (EEAFASSQSSQGAQSLTFSK) are disordered. The segment covering 69–84 (FASSQSSQGAQSLTFS) has biased composition (low complexity). Phosphoserine is present on residues Ser-124 and Ser-132. Lys-151 and Lys-170 each carry N6-acetyllysine. Residues 232–375 (EKKDLAIQKR…IEKLDAQSLN (144 aa)) enclose the VPS9 domain. 4 positions are modified to phosphoserine: Ser-373, Ser-377, Ser-390, and Ser-400. Positions 462-491 (PPNQPLAAIDSENVENDKLPPPLQPQVYAG) are disordered.

Interacts with RGS14; the interaction is GTP-dependent. Heterodimer with RABEP1. The heterodimer binds RAB4A and RAB5A that have been activated by GTP-binding. Interacts with RAB21, and with 100-fold lower affinity also with RAB22. Binds TSC2, GGA1, GGA2, GGA3, AP1G1 and AP1G2. Interacts with ubiquitinated EGFR. Monoubiquitinated.

The protein localises to the cytoplasm. It localises to the early endosome. The protein resides in the recycling endosome. Its function is as follows. Rab effector protein acting as linker between gamma-adaptin, RAB4A or RAB5A. Involved in endocytic membrane fusion and membrane trafficking of recycling endosomes. Stimulates nucleotide exchange on RAB5A. Can act as a ubiquitin ligase. The sequence is that of Rab5 GDP/GTP exchange factor (RABGEF1) from Homo sapiens (Human).